The sequence spans 245 residues: Enolase-phosphatase E1 (245 aa).

Belongs to the HAD-like hydrolase superfamily. MasA/MtnC family. As to quaternary structure, monomer. Requires Mg(2+) as cofactor.

It carries out the reaction 5-methylsulfanyl-2,3-dioxopentyl phosphate + H2O = 1,2-dihydroxy-5-(methylsulfanyl)pent-1-en-3-one + phosphate. Its pathway is amino-acid biosynthesis; L-methionine biosynthesis via salvage pathway; L-methionine from S-methyl-5-thio-alpha-D-ribose 1-phosphate: step 3/6. The protein operates within amino-acid biosynthesis; L-methionine biosynthesis via salvage pathway; L-methionine from S-methyl-5-thio-alpha-D-ribose 1-phosphate: step 4/6. Functionally, bifunctional enzyme that catalyzes the enolization of 2,3-diketo-5-methylthiopentyl-1-phosphate (DK-MTP-1-P) into the intermediate 2-hydroxy-3-keto-5-methylthiopentenyl-1-phosphate (HK-MTPenyl-1-P), which is then dephosphorylated to form the acireductone 1,2-dihydroxy-3-keto-5-methylthiopentene (DHK-MTPene). In Prochlorococcus marinus (strain MIT 9313), this protein is Enolase-phosphatase E1.